The primary structure comprises 400 residues: CCA-adding enzyme (400 aa).

The ATP site is built by Gly-28 and Arg-31. CTP is bound by residues Gly-28 and Arg-31. Residues Asp-41 and Asp-43 each coordinate Mg(2+). ATP-binding residues include Arg-112, Asp-155, Arg-158, Arg-161, and Arg-164. CTP contacts are provided by Arg-112, Asp-155, Arg-158, Arg-161, and Arg-164.

It belongs to the tRNA nucleotidyltransferase/poly(A) polymerase family. Bacterial CCA-adding enzyme type 3 subfamily. As to quaternary structure, homodimer. Mg(2+) serves as cofactor.

The catalysed reaction is a tRNA precursor + 2 CTP + ATP = a tRNA with a 3' CCA end + 3 diphosphate. It catalyses the reaction a tRNA with a 3' CCA end + 2 CTP + ATP = a tRNA with a 3' CCACCA end + 3 diphosphate. In terms of biological role, catalyzes the addition and repair of the essential 3'-terminal CCA sequence in tRNAs without using a nucleic acid template. Adds these three nucleotides in the order of C, C, and A to the tRNA nucleotide-73, using CTP and ATP as substrates and producing inorganic pyrophosphate. tRNA 3'-terminal CCA addition is required both for tRNA processing and repair. Also involved in tRNA surveillance by mediating tandem CCA addition to generate a CCACCA at the 3' terminus of unstable tRNAs. While stable tRNAs receive only 3'-terminal CCA, unstable tRNAs are marked with CCACCA and rapidly degraded. In Staphylococcus epidermidis (strain ATCC 12228 / FDA PCI 1200), this protein is CCA-adding enzyme.